Reading from the N-terminus, the 550-residue chain is Integral membrane protein DGCR2/IDD (550 aa).

A signal peptide spans 1–20 (MVPKADSGAFLLLFLLVLTV). At 21-349 (TEPLRPELRC…LFDSMASGMR (329 aa)) the chain is on the extracellular side. Residues 28–68 (LRCNPGQFACRSGTIQCIPLPWQCDGWATCEDESDEANCPE) form the LDL-receptor class A domain. Cystine bridges form between Cys30–Cys44, Cys37–Cys57, and Cys51–Cys66. A disordered region spans residues 69 to 92 (VTGEVRPHHGKEAVDPRQGRARGG). Residues 71 to 92 (GEVRPHHGKEAVDPRQGRARGG) are compositionally biased toward basic and acidic residues. Residues 115–241 (CPTGWHHYEG…FCAQLQCFHF (127 aa)) form the C-type lectin domain. Cystine bridges form between Cys145–Cys265 and Cys233–Cys257. 2 N-linked (GlcNAc...) asparagine glycosylation sites follow: Asn149 and Asn196. One can recognise a VWFC domain in the interval 270–333 (TCVDIKDNVV…PKECCKFMCL (64 aa)). The helical transmembrane segment at 350-368 (LVVSCISSFLILSLLLFMV) threads the bilayer. Residues 369–550 (HRLRQRRRER…HSRSSLNTVV (182 aa)) are Cytoplasmic-facing. Residue Ser381 is modified to Phosphoserine. The tract at residues 500-550 (AGASLADLEDSADSSSALLVPPDPAQSGSTPAAEALPGGGRHSRSSLNTVV) is disordered.

As to expression, predominantly expressed in brain, heart, lung and fetal kidney. Low levels in liver and adult kidney.

Its subcellular location is the membrane. Functionally, putative adhesion receptor, that could be involved in cell-cell or cell-matrix interactions required for normal cell differentiation and migration. This Homo sapiens (Human) protein is Integral membrane protein DGCR2/IDD (DGCR2).